The following is a 120-amino-acid chain: Ribonuclease P protein component 4 (120 aa).

Positions 68, 71, 97, and 100 each coordinate Zn(2+).

Belongs to the eukaryotic/archaeal RNase P protein component 4 family. As to quaternary structure, consists of a catalytic RNA component and at least 5 protein subunits. Forms a heterodimeric subcomplex with Rnp1. Reconstituted enzyme missing individual protein subunits is suboptimally active, showing each subunit contributes to optimization of activity. It depends on Zn(2+) as a cofactor.

The protein resides in the cytoplasm. It carries out the reaction Endonucleolytic cleavage of RNA, removing 5'-extranucleotides from tRNA precursor.. Its function is as follows. Part of ribonuclease P, a protein complex that generates mature tRNA molecules by cleaving their 5'-ends. Binds RNase P RNA. This Pyrococcus horikoshii (strain ATCC 700860 / DSM 12428 / JCM 9974 / NBRC 100139 / OT-3) protein is Ribonuclease P protein component 4.